The primary structure comprises 957 residues: MAPTAVFSNPATNPVANLKASVKTAEGVPATLNDLLLQATEMYPSHELSFITSSAHDSSVQARTFQDFNQRVRNLASALAAWKKPAGEVVVVYLTEHEDNMSAVWACLLAGLVPCLQPALSAQQEHKEGHIAHIRKLFGSATWLTNDAGAMQLDTIKGLDVHLFSDLLASAEKSSVAANYVARQSQPDDEAILFLTSGSTGFSKAVVHTHRTIINACIAKGANYRLTPQTNILNWVGFDHVAGSLEMHIAPLLYGCSQLHVHASAILSDPLLLLRLIDERSIDIAFAPNFLLAKMVRDLEKRTDLHGKFDLSSLRRMNSGGEAVVSKTAVAFVQLLKKLGRNPSKVSFKVAAGFGMTETCAGCIYDVVDLAENSPKHEFLALGAPVHGCEMRIVDPEDGATPRSDGQPGELQVRGPMIFVRYYNNPEATKSSFVEGGWYRTGDIGIIENGNMRLSGRIKDTVIVHGVSYGIPELETYLQTVQGVTHSFLAAAPYRAPGQETEGFVVFYAPTFDLQGDDASKKLSETHRAIKDVSVKMMTLPPQHIVPIPMDQMEKTTLGKLSRARLLSQFVQGALAKHVARAEELISMARGASFVTPSTDDEKALAAIYAGIFNLQSNEVSARDNFFELGGTSIDVIRLKREGEAHFGLSEIPIIQILKNPIVSDLAKYVNGLVNNDASANEYDPIVPLQLSGDKTPIFFVHPGVGEVLIFVNLAKYFQNERPFYAFRARGFEPGHPFFGSMDEMVTSYANAMKKTQPKGPYAIAGYSYGGVVAFEVAKRLESMGEEVKFVGLINIPPHIADRMHEIDWTGGMLNLAYFLSLVTKQDATDLHPKLKTMTKEEQLEVVWKLAPPERVTELQLTPGKLDHWVSIAGSLIECGKSYNPGGNVSAVDVFYAIPLKGSKEDWLNKQLKPWSQFSRGEPQFIDVPGQHYTLMDFDHVPQFQKIFRGRLEARGL.

Residues 59–464 (SVQARTFQDF…SGRIKDTVIV (406 aa)) form an adenylation (A) domain region. The Carrier domain maps to 596–674 (TPSTDDEKAL…DLAKYVNGLV (79 aa)). Residues 601–671 (DEKALAAIYA…IVSDLAKYVN (71 aa)) are thiolation and peptide carrier (T) domain. O-(pantetheine 4'-phosphoryl)serine is present on serine 633. The interval 697–947 (PIFFVHPGVG…FDHVPQFQKI (251 aa)) is thioesterase (TE) domain.

Belongs to the ATP-dependent AMP-binding enzyme family.

It participates in secondary metabolite biosynthesis. Functionally, the L-tyrosine:2-oxoglutarate aminotransferase atrD and the atromentin synthetase atrA catalyze consecutive steps to turn over L-tyrosine into atromentin, which represents the generic precursor molecule for the entire terphenylquinone and pulvinic acid family of pigments, which are widely distributed secondary metabolites in homobasidiomycetes. The first step is catalyzed by atrD which converts L-tyrosine in to 4-hydroxyphenylpyruvate (4-HPP). Adenylation of two 4-HPP monomers by the atrA adenylation (A) domain, ester bond formation between monomers and atrA, and symmetric C-C-bond formation between two monomers by atrA leads to atromentin. This is Atromentin synthetase from Tapinella panuoides (Oyster rollrim mushroom).